The sequence spans 221 residues: Ribonuclease T (221 aa).

An Exonuclease domain is found at Val-20–Phe-196. The Mg(2+) site is built by Asp-23, Glu-25, His-183, and Asp-188. His-183 (proton donor/acceptor) is an active-site residue.

Belongs to the RNase T family. As to quaternary structure, homodimer. Mg(2+) serves as cofactor.

In terms of biological role, trims short 3' overhangs of a variety of RNA species, leaving a one or two nucleotide 3' overhang. Responsible for the end-turnover of tRNA: specifically removes the terminal AMP residue from uncharged tRNA (tRNA-C-C-A). Also appears to be involved in tRNA biosynthesis. In Chromohalobacter salexigens (strain ATCC BAA-138 / DSM 3043 / CIP 106854 / NCIMB 13768 / 1H11), this protein is Ribonuclease T.